The following is a 410-amino-acid chain: Neurotensin receptor type 2 (410 aa).

Topologically, residues 1 to 32 are extracellular; that stretch reads METSSPRPPRPSSNPGLSLDARLGVDTRLWAK. A helical membrane pass occupies residues 33–55; sequence VLFTALYALIWALGAAGNALSAH. At 56-64 the chain is on the cytoplasmic side; that stretch reads VVLKARAGR. A helical membrane pass occupies residues 65-87; that stretch reads AGRLRHHVLSLALAGLLLLLVGV. Residues 88–109 are Extracellular-facing; it reads PVELYSFVWFHYPWVFGDLGCR. An intrachain disulfide couples C108 to C194. Residues 110-131 traverse the membrane as a helical segment; it reads GYYFVHELCAYATVLSVAGLSA. The Cytoplasmic segment spans residues 132-154; it reads ERCLAVCQPLRARSLLTPRRTRW. Residues 155–176 form a helical membrane-spanning segment; that stretch reads LVALSWAASLGLALPMAVIMGQ. The Extracellular segment spans residues 177 to 217; sequence KHELETADGEPEPASRVCTVLVSRTALQVFIQVNVLVSFVL. The chain crosses the membrane as a helical span at residues 218-237; the sequence is PLALTAFLNGVTVSHLLALC. The Cytoplasmic portion of the chain corresponds to 238–297; the sequence is SQVPSTSTPGSSTPSRLELLSEEGLLSFIVWKKTFIQGGQVSLVRHKDVRRIRSLQRSVQ. Residues 298–318 form a helical membrane-spanning segment; the sequence is VLRAIVVMYVICWLPYHARRL. Residues 319 to 337 lie on the Extracellular side of the membrane; sequence MYCYVPDDAWTDPLYNFYH. Residues 338 to 358 form a helical membrane-spanning segment; that stretch reads YFYMVTNTLFYVSSAVTPLLY. Over 359–410 the chain is Cytoplasmic; it reads NAVSSSFRKLFLEAVSSLCGEHHPMKRLPPKPQSPTLMDTASGFGDPPETRT. C377 carries the S-palmitoyl cysteine lipid modification. A disordered region spans residues 381–410; that stretch reads HPMKRLPPKPQSPTLMDTASGFGDPPETRT.

Belongs to the G-protein coupled receptor 1 family. Neurotensin receptor subfamily. NTSR2 sub-subfamily. In terms of tissue distribution, expressed in prostate (at protein level).

It localises to the cell membrane. Functionally, receptor for the tridecapeptide neurotensin. It is associated with G proteins that activate a phosphatidylinositol-calcium second messenger system. The polypeptide is Neurotensin receptor type 2 (NTSR2) (Homo sapiens (Human)).